Here is a 624-residue protein sequence, read N- to C-terminus: Iron transport multicopper oxidase FET3 (624 aa).

An N-terminal signal peptide occupies residues 1-20 (MRTFLSSFIILTTFLASLIA). The Extracellular portion of the chain corresponds to 21 to 555 (AETHTWYFKT…KRLPTGFTTK (535 aa)). Plastocyanin-like domains are found at residues 46-144 (IGFN…FIIE) and 190-292 (NFLF…LQVN). Residues N49 and N77 are each glycosylated (N-linked (GlcNAc...) asparagine). Cu cation is bound by residues H81 and H83. Residue N113 is glycosylated (N-linked (GlcNAc...) asparagine). Cu cation-binding residues include H126 and H128. N-linked (GlcNAc...) asparagine glycosylation is found at N194, N198, N244, N265, N292, N300, and N359. In terms of domain architecture, Plastocyanin-like 3 spans 382-499 (NELIYGTNTN…QGLAVVLIED (118 aa)). 3 residues coordinate Cu cation: H413, H416, and H418. N441 carries N-linked (GlcNAc...) asparagine glycosylation. Cu cation is bound by residues H481, C482, H483, and H487. A helical transmembrane segment spans residues 556 to 576 (GIVALVFSCVAAFLGLFSFSF). Residues 577 to 624 (YGMNDIAHVEDKVARDLDIDLEAENEDEEEAVVLNQNSSSSDSNSKPH) are Cytoplasmic-facing. The disordered stretch occupies residues 603–624 (DEEEAVVLNQNSSSSDSNSKPH). Residues 608 to 624 (VVLNQNSSSSDSNSKPH) are compositionally biased toward low complexity.

The protein belongs to the multicopper oxidase family. It depends on Cu cation as a cofactor.

The protein localises to the cell membrane. Functionally, iron transport multicopper ferroxidase required for Fe(2+) high affinity uptake. Required to oxidize Fe(2+) and release it from the transporter. Essential component of copper-dependent iron transport. The sequence is that of Iron transport multicopper oxidase FET3 (FET3) from Candida albicans (Yeast).